A 156-amino-acid chain; its full sequence is Probable histone H2A.6 (156 aa).

2 disordered regions span residues Met-1–Val-26 and Lys-129–Ser-156. A compositionally biased stretch (basic residues) spans Ala-9 to Val-26. The segment covering Lys-130–Ala-147 has biased composition (basic and acidic residues). The short motif at Ser-149–Lys-152 is the SPKK motif element.

Belongs to the histone H2A family. In terms of assembly, the nucleosome is a histone octamer containing two molecules each of H2A, H2B, H3 and H4 assembled in one H3-H4 heterotetramer and two H2A-H2B heterodimers. The octamer wraps approximately 147 bp of DNA.

It localises to the nucleus. Its subcellular location is the chromosome. Functionally, core component of nucleosome. Nucleosomes wrap and compact DNA into chromatin, limiting DNA accessibility to the cellular machineries which require DNA as a template. Histones thereby play a central role in transcription regulation, DNA repair, DNA replication and chromosomal stability. DNA accessibility is regulated via a complex set of post-translational modifications of histones, also called histone code, and nucleosome remodeling. In Oryza sativa subsp. indica (Rice), this protein is Probable histone H2A.6.